A 337-amino-acid polypeptide reads, in one-letter code: UDP-3-O-acylglucosamine N-acyltransferase (337 aa).

H238 (proton acceptor) is an active-site residue.

It belongs to the transferase hexapeptide repeat family. LpxD subfamily. Homotrimer.

The catalysed reaction is a UDP-3-O-[(3R)-3-hydroxyacyl]-alpha-D-glucosamine + a (3R)-hydroxyacyl-[ACP] = a UDP-2-N,3-O-bis[(3R)-3-hydroxyacyl]-alpha-D-glucosamine + holo-[ACP] + H(+). It participates in bacterial outer membrane biogenesis; LPS lipid A biosynthesis. In terms of biological role, catalyzes the N-acylation of UDP-3-O-acylglucosamine using 3-hydroxyacyl-ACP as the acyl donor. Is involved in the biosynthesis of lipid A, a phosphorylated glycolipid that anchors the lipopolysaccharide to the outer membrane of the cell. The sequence is that of UDP-3-O-acylglucosamine N-acyltransferase from Xanthomonas campestris pv. campestris (strain 8004).